The sequence spans 1105 residues: DNA polymerase delta catalytic subunit (1105 aa).

Residues 1–46 (MSSGGRGGKRRGAPPPGPSGAAAKRAHPGGTPQPPPPAATAAAPVA) are disordered. Zn(2+) is bound by residues cysteine 1015, cysteine 1018, cysteine 1030, and cysteine 1033. The CysA-type zinc-finger motif lies at 1015–1033 (CLGCKAVISGSNQTLCFHC). Cysteine 1062, cysteine 1065, cysteine 1075, and cysteine 1080 together coordinate [4Fe-4S] cluster. The CysB motif signature appears at 1062–1080 (CQECQGSLHQDVLCTSRDC).

This sequence belongs to the DNA polymerase type-B family. Heterodimer with subunits of 125 kDa and 50 kDa. The 125 kDa subunit contains the polymerase active site and most likely the active site for the 3'-5' exonuclease activity. It depends on [4Fe-4S] cluster as a cofactor.

The protein localises to the nucleus. It catalyses the reaction DNA(n) + a 2'-deoxyribonucleoside 5'-triphosphate = DNA(n+1) + diphosphate. Its function is as follows. This polymerase possesses two enzymatic activities: DNA synthesis (polymerase) and an exonucleolytic activity that degrades single-stranded DNA in the 3'- to 5'-direction. The chain is DNA polymerase delta catalytic subunit (POLD1) from Oryza sativa subsp. japonica (Rice).